We begin with the raw amino-acid sequence, 491 residues long: Acetyl-coenzyme A carboxylase carboxyl transferase subunit beta, chloroplastic (491 aa).

Positions 28 to 56 (LGPIENTSESEDPNRNDMKKNSHSWGSRD) are disordered. The CoA carboxyltransferase N-terminal domain occupies 223–491 (LWVQCENCYG…FPLNKNSIEH (269 aa)). 4 residues coordinate Zn(2+): cysteine 227, cysteine 230, cysteine 246, and cysteine 249. The C4-type zinc finger occupies 227-249 (CENCYGLNYKKILKSKMNLCEQC).

Belongs to the AccD/PCCB family. In terms of assembly, acetyl-CoA carboxylase is a heterohexamer composed of biotin carboxyl carrier protein, biotin carboxylase and 2 subunits each of ACCase subunit alpha and ACCase plastid-coded subunit beta (accD). The cofactor is Zn(2+).

The protein localises to the plastid. It localises to the chloroplast stroma. It carries out the reaction N(6)-carboxybiotinyl-L-lysyl-[protein] + acetyl-CoA = N(6)-biotinyl-L-lysyl-[protein] + malonyl-CoA. It functions in the pathway lipid metabolism; malonyl-CoA biosynthesis; malonyl-CoA from acetyl-CoA: step 1/1. In terms of biological role, component of the acetyl coenzyme A carboxylase (ACC) complex. Biotin carboxylase (BC) catalyzes the carboxylation of biotin on its carrier protein (BCCP) and then the CO(2) group is transferred by the transcarboxylase to acetyl-CoA to form malonyl-CoA. The chain is Acetyl-coenzyme A carboxylase carboxyl transferase subunit beta, chloroplastic from Daucus carota (Wild carrot).